The primary structure comprises 274 residues: Centromere protein K (274 aa).

The segment at Met-1 to Glu-21 is disordered. Residues Lys-96–Arg-159 adopt a coiled-coil conformation.

Belongs to the CENP-K/MCM22 family.

Its subcellular location is the nucleus. The protein resides in the chromosome. It localises to the centromere. The protein localises to the kinetochore. In terms of biological role, probable component of a centromeric complex involved in assembly of kinetochore proteins, mitotic progression and chromosome segregation. This Xenopus laevis (African clawed frog) protein is Centromere protein K (cenpk).